A 250-amino-acid polypeptide reads, in one-letter code: Putative ankyrin repeat protein RBE_0623 (250 aa).

ANK repeat units lie at residues 70–99 (IGDS…EPNT), 104–134 (NCYT…NINE), and 137–166 (GKET…PDKF).

This chain is Putative ankyrin repeat protein RBE_0623, found in Rickettsia bellii (strain RML369-C).